A 36-amino-acid polypeptide reads, in one-letter code: Photosystem II reaction center protein Y (36 aa).

Residues 1–4 (MDTR) are Lumenal-facing. The helical transmembrane segment at 5–23 (LIVIAAPVLVAASWALFNI) threads the bilayer. Residues 24–36 (GRLAIQQIQRLKR) lie on the Stromal side of the membrane.

The protein belongs to the PsbY family. In terms of assembly, PSII is composed of 1 copy each of membrane proteins PsbA, PsbB, PsbC, PsbD, PsbE, PsbF, PsbH, PsbI, PsbJ, PsbK, PsbL, PsbM, PsbT, PsbX, PsbY, PsbZ, Psb30/Ycf12, at least 3 peripheral proteins of the oxygen-evolving complex and a large number of cofactors. It forms dimeric complexes.

The protein resides in the plastid. Its subcellular location is the chloroplast thylakoid membrane. Its function is as follows. Loosely associated component of the core of photosystem II (PSII), it is not always seen in crystals. PSII is a light-driven water plastoquinone oxidoreductase, using light energy to abstract electrons from H(2)O, generating a proton gradient subsequently used for ATP formation. In Phaeodactylum tricornutum (strain CCAP 1055/1), this protein is Photosystem II reaction center protein Y.